The chain runs to 210 residues: ATP phosphoribosyltransferase (210 aa).

This sequence belongs to the ATP phosphoribosyltransferase family. Short subfamily. Heteromultimer composed of HisG and HisZ subunits.

The protein resides in the cytoplasm. The catalysed reaction is 1-(5-phospho-beta-D-ribosyl)-ATP + diphosphate = 5-phospho-alpha-D-ribose 1-diphosphate + ATP. Its pathway is amino-acid biosynthesis; L-histidine biosynthesis; L-histidine from 5-phospho-alpha-D-ribose 1-diphosphate: step 1/9. Functionally, catalyzes the condensation of ATP and 5-phosphoribose 1-diphosphate to form N'-(5'-phosphoribosyl)-ATP (PR-ATP). Has a crucial role in the pathway because the rate of histidine biosynthesis seems to be controlled primarily by regulation of HisG enzymatic activity. This is ATP phosphoribosyltransferase from Picosynechococcus sp. (strain ATCC 27264 / PCC 7002 / PR-6) (Agmenellum quadruplicatum).